A 97-amino-acid chain; its full sequence is Large ribosomal subunit protein eL21 (97 aa).

The protein belongs to the eukaryotic ribosomal protein eL21 family.

The protein is Large ribosomal subunit protein eL21 of Methanospirillum hungatei JF-1 (strain ATCC 27890 / DSM 864 / NBRC 100397 / JF-1).